A 318-amino-acid polypeptide reads, in one-letter code: Ribose-phosphate pyrophosphokinase 2 (318 aa).

ATP is bound at residue 96–101 (RQDKKD). Mg(2+)-binding residues include D128, H130, D139, and D143. Residue H130 participates in ATP binding. Residues 212-227 (KDRVAILVDDMADTCG) are binding of phosphoribosylpyrophosphate.

It belongs to the ribose-phosphate pyrophosphokinase family. In terms of assembly, homodimer. The active form is probably a hexamer composed of 3 homodimers. Mg(2+) serves as cofactor.

The enzyme catalyses D-ribose 5-phosphate + ATP = 5-phospho-alpha-D-ribose 1-diphosphate + AMP + H(+). The protein operates within metabolic intermediate biosynthesis; 5-phospho-alpha-D-ribose 1-diphosphate biosynthesis; 5-phospho-alpha-D-ribose 1-diphosphate from D-ribose 5-phosphate (route I): step 1/1. Activated by magnesium and inorganic phosphate. Competitively or non-competitively inhibited by ADP, 2,3-bisphosphoglyceride or GDP. In terms of biological role, catalyzes the synthesis of phosphoribosylpyrophosphate (PRPP) that is essential for nucleotide synthesis. The chain is Ribose-phosphate pyrophosphokinase 2 (prps2) from Xenopus laevis (African clawed frog).